The primary structure comprises 201 residues: Small ribosomal subunit protein uS4B (201 aa).

Residues Q93–L156 enclose the S4 RNA-binding domain.

Belongs to the universal ribosomal protein uS4 family. Part of the 30S ribosomal subunit. Contacts protein S5. The interaction surface between S4 and S5 is involved in control of translational fidelity.

Functionally, one of the primary rRNA binding proteins, it binds directly to 16S rRNA where it nucleates assembly of the body of the 30S subunit. With S5 and S12 plays an important role in translational accuracy. The chain is Small ribosomal subunit protein uS4B from Symbiobacterium thermophilum (strain DSM 24528 / JCM 14929 / IAM 14863 / T).